The sequence spans 250 residues: UPF0736 protein BPUM_1067 (250 aa).

It belongs to the UPF0736 family.

In Bacillus pumilus (strain SAFR-032), this protein is UPF0736 protein BPUM_1067.